A 129-amino-acid polypeptide reads, in one-letter code: Small ribosomal subunit protein uS11 (129 aa).

This sequence belongs to the universal ribosomal protein uS11 family. Part of the 30S ribosomal subunit. Interacts with proteins S7 and S18. Binds to IF-3.

Its function is as follows. Located on the platform of the 30S subunit, it bridges several disparate RNA helices of the 16S rRNA. Forms part of the Shine-Dalgarno cleft in the 70S ribosome. The protein is Small ribosomal subunit protein uS11 of Salmonella newport (strain SL254).